Here is a 329-residue protein sequence, read N- to C-terminus: Replication factor C small subunit 1 (329 aa).

44-51 (GPPGTGKT) is an ATP binding site.

The protein belongs to the activator 1 small subunits family. RfcS subfamily. In terms of assembly, heteromultimer composed of small subunits (RfcS) and large subunits (RfcL).

Functionally, part of the RFC clamp loader complex which loads the PCNA sliding clamp onto DNA. The chain is Replication factor C small subunit 1 from Pyrobaculum aerophilum (strain ATCC 51768 / DSM 7523 / JCM 9630 / CIP 104966 / NBRC 100827 / IM2).